A 68-amino-acid polypeptide reads, in one-letter code: Large ribosomal subunit protein bL31 (68 aa).

Residues C16, C18, C37, and C40 each coordinate Zn(2+).

It belongs to the bacterial ribosomal protein bL31 family. Type A subfamily. Part of the 50S ribosomal subunit. The cofactor is Zn(2+).

Functionally, binds the 23S rRNA. The chain is Large ribosomal subunit protein bL31 from Acidithiobacillus ferrooxidans (strain ATCC 23270 / DSM 14882 / CIP 104768 / NCIMB 8455) (Ferrobacillus ferrooxidans (strain ATCC 23270)).